A 140-amino-acid chain; its full sequence is Probable lipoprotein LppE (140 aa).

The N-terminal stretch at 1 to 21 (MCNRLVTVTGVAMVVAAGLSA) is a signal peptide. The N-palmitoyl cysteine moiety is linked to residue Cys-22. A lipid anchor (S-diacylglycerol cysteine) is attached at Cys-22.

It belongs to the mycobacterial 19 kDa antigen family.

The protein resides in the cell membrane. The polypeptide is Probable lipoprotein LppE (lppE) (Mycobacterium tuberculosis (strain ATCC 25618 / H37Rv)).